The sequence spans 207 residues: High frequency lysogenization protein HflD homolog (207 aa).

It belongs to the HflD family.

It is found in the cytoplasm. The protein resides in the cell inner membrane. The chain is High frequency lysogenization protein HflD homolog from Methylococcus capsulatus (strain ATCC 33009 / NCIMB 11132 / Bath).